Reading from the N-terminus, the 633-residue chain is Chaperone protein HtpG (633 aa).

Residues 1–345 (MSADTQSETL…SDDLPLNISR (345 aa)) form an a; substrate-binding region. Residues 346 to 562 (EMLQHNPMIS…EYDFGMGMQR (217 aa)) are b. The c stretch occupies residues 563-633 (LLQAAGHQLP…VRRVNNLLAG (71 aa)).

This sequence belongs to the heat shock protein 90 family. As to quaternary structure, homodimer.

The protein localises to the cytoplasm. In terms of biological role, molecular chaperone. Has ATPase activity. The protein is Chaperone protein HtpG of Halorhodospira halophila (strain DSM 244 / SL1) (Ectothiorhodospira halophila (strain DSM 244 / SL1)).